Here is a 207-residue protein sequence, read N- to C-terminus: Holliday junction branch migration complex subunit RuvA (207 aa).

The segment at 1 to 63 (MISSLRGTVL…EDSLQLFGFS (63 aa)) is domain I. The segment at 64–142 (GLEQLQVFEL…ACRRPSAPSA (79 aa)) is domain II. Residues 142–146 (ARRPS) are flexible linker. A domain III region spans residues 147–207 (APSSVSDSVL…RLGPANQAAR (61 aa)).

Belongs to the RuvA family. Homotetramer. Forms an RuvA(8)-RuvB(12)-Holliday junction (HJ) complex. HJ DNA is sandwiched between 2 RuvA tetramers; dsDNA enters through RuvA and exits via RuvB. An RuvB hexamer assembles on each DNA strand where it exits the tetramer. Each RuvB hexamer is contacted by two RuvA subunits (via domain III) on 2 adjacent RuvB subunits; this complex drives branch migration. In the full resolvosome a probable DNA-RuvA(4)-RuvB(12)-RuvC(2) complex forms which resolves the HJ.

It is found in the cytoplasm. In terms of biological role, the RuvA-RuvB-RuvC complex processes Holliday junction (HJ) DNA during genetic recombination and DNA repair, while the RuvA-RuvB complex plays an important role in the rescue of blocked DNA replication forks via replication fork reversal (RFR). RuvA specifically binds to HJ cruciform DNA, conferring on it an open structure. The RuvB hexamer acts as an ATP-dependent pump, pulling dsDNA into and through the RuvAB complex. HJ branch migration allows RuvC to scan DNA until it finds its consensus sequence, where it cleaves and resolves the cruciform DNA. The chain is Holliday junction branch migration complex subunit RuvA from Leifsonia xyli subsp. xyli (strain CTCB07).